A 376-amino-acid chain; its full sequence is Protein-glutamate methylesterase/protein-glutamine glutaminase (376 aa).

The Response regulatory domain occupies 4-121 (KVLVVDDSSF…ARNRDEAVSL (118 aa)). Position 55 is a 4-aspartylphosphate (aspartate 55). The disordered stretch occupies residues 142 to 161 (SSQSTSTVESRTATTRTATS). Residues 145–161 (STSTVESRTATTRTATS) show a composition bias toward low complexity. Residues 183–376 (TGKKYQLTAI…ERMLVEVGLK (194 aa)) form the CheB-type methylesterase domain. Catalysis depends on residues serine 195, histidine 222, and aspartate 318.

The protein belongs to the CheB family. Phosphorylated by CheA. Phosphorylation of the N-terminal regulatory domain activates the methylesterase activity.

The protein resides in the cytoplasm. The enzyme catalyses [protein]-L-glutamate 5-O-methyl ester + H2O = L-glutamyl-[protein] + methanol + H(+). It carries out the reaction L-glutaminyl-[protein] + H2O = L-glutamyl-[protein] + NH4(+). Its function is as follows. Involved in chemotaxis. Part of a chemotaxis signal transduction system that modulates chemotaxis in response to various stimuli. Catalyzes the demethylation of specific methylglutamate residues introduced into the chemoreceptors (methyl-accepting chemotaxis proteins or MCP) by CheR. Also mediates the irreversible deamidation of specific glutamine residues to glutamic acid. The sequence is that of Protein-glutamate methylesterase/protein-glutamine glutaminase from Aliivibrio fischeri (strain ATCC 700601 / ES114) (Vibrio fischeri).